The following is a 68-amino-acid chain: MAKASELKELSLADLQKREAEFKEELFNLRFQLATGQLENTARIAQVRKDIARVKTVIRAQELANANK.

The protein belongs to the universal ribosomal protein uL29 family.

This Leuconostoc citreum (strain KM20) protein is Large ribosomal subunit protein uL29.